The chain runs to 168 residues: Phosphopantetheine adenylyltransferase (168 aa).

Residue Thr13 coordinates substrate. Residues 13 to 14 (TF) and His21 each bind ATP. Positions 45, 78, and 92 each coordinate substrate. ATP contacts are provided by residues 93–95 (GLR), Glu103, and 128–134 (TQFISSS).

Belongs to the bacterial CoaD family. Homohexamer. Requires Mg(2+) as cofactor.

Its subcellular location is the cytoplasm. The enzyme catalyses (R)-4'-phosphopantetheine + ATP + H(+) = 3'-dephospho-CoA + diphosphate. The protein operates within cofactor biosynthesis; coenzyme A biosynthesis; CoA from (R)-pantothenate: step 4/5. In terms of biological role, reversibly transfers an adenylyl group from ATP to 4'-phosphopantetheine, yielding dephospho-CoA (dPCoA) and pyrophosphate. The protein is Phosphopantetheine adenylyltransferase of Wolbachia pipientis subsp. Culex pipiens (strain wPip).